A 312-amino-acid chain; its full sequence is MRIIFAGTPPFAAAALEALADAGHEIALVLTQPDRPAGRGMKNASSAVKLLAQKRGFGLLQPPSLRQPELHMQLEAVRADIMVVAAYGLILPFSVLNIPKLGCVNIHASLLPRWRGAAPIERAILAGDRETGITIMQMDRGLDTGPILLVRSITIAKDDTAGTLHEKLGQLGAACIVEALALLQQGKIIATPQNDLAATYASKLEKTEAEIDWRMDAENIDRAVRAFNPRPGMHSTVNGISMKVWQTSVDIAETDEKPGEIVAIRPDGIVVACGKHALILKIVQKSGGKKLRSAEFLLGHSLHPHDRFESGE.

Position 109-112 (109-112) interacts with (6S)-5,6,7,8-tetrahydrofolate; that stretch reads SLLP.

This sequence belongs to the Fmt family.

The catalysed reaction is L-methionyl-tRNA(fMet) + (6R)-10-formyltetrahydrofolate = N-formyl-L-methionyl-tRNA(fMet) + (6S)-5,6,7,8-tetrahydrofolate + H(+). In terms of biological role, attaches a formyl group to the free amino group of methionyl-tRNA(fMet). The formyl group appears to play a dual role in the initiator identity of N-formylmethionyl-tRNA by promoting its recognition by IF2 and preventing the misappropriation of this tRNA by the elongation apparatus. The protein is Methionyl-tRNA formyltransferase of Nitrosospira multiformis (strain ATCC 25196 / NCIMB 11849 / C 71).